The chain runs to 37 residues: Alpha-conotoxin LvIA (37 aa).

Residues 1–20 constitute a propeptide that is removed on maturation; it reads FRGRDAAAKASGLVGLTDRR. 2 disulfide bridges follow: Cys-22/Cys-28 and Cys-23/Cys-36. The segment at 24-26 is ser-Xaa-Pro motif, crucial for potent interaction with nAChR; it reads SHP. At Cys-36 the chain carries Cysteine amide.

The protein belongs to the conotoxin A superfamily. As to expression, expressed by the venom duct.

It localises to the secreted. Its function is as follows. Alpha-conotoxins act on postsynaptic membranes, they bind to the nicotinic acetylcholine receptors (nAChR) and thus inhibit them. This toxin blocks alpha-3-beta-2/CHRNA3-CHRNB2 nAChR with high selectivity (IC(50)=8.67 nM (on rat) and 17.5 (on human)). Also has weaker activity on alpha-6/alpha-3-beta-2-beta-3 (CHRNA6/CHRNA3-CHRNB2-CHRNB3) (IC(50)=108 nM (on rat)), alpha-6/alpha-3-beta-4 (CHRNA6/CHRNA3-CHRNB4) (IC(50)=121 nM (on rat)), alpha-3-beta-4 (CHRNA3-CHRNB4) (IC(50)=148 nM (on rat)), and alpha-7/CHRNA7 nAChRs (IC(50)=3000 nM (on rat)). When tested on mouse with hot-plate tests, this toxin significantly increases the base pain threshold and shows analgesic effects. This Conus lividus (Livid cone) protein is Alpha-conotoxin LvIA.